The sequence spans 146 residues: Ribosome-binding factor A (146 aa).

Residues 127–146 (EFAGEADPYKKPEDDEAAES) form a disordered region.

It belongs to the RbfA family. In terms of assembly, monomer. Binds 30S ribosomal subunits, but not 50S ribosomal subunits or 70S ribosomes.

The protein localises to the cytoplasm. Functionally, one of several proteins that assist in the late maturation steps of the functional core of the 30S ribosomal subunit. Associates with free 30S ribosomal subunits (but not with 30S subunits that are part of 70S ribosomes or polysomes). Required for efficient processing of 16S rRNA. May interact with the 5'-terminal helix region of 16S rRNA. This Renibacterium salmoninarum (strain ATCC 33209 / DSM 20767 / JCM 11484 / NBRC 15589 / NCIMB 2235) protein is Ribosome-binding factor A.